We begin with the raw amino-acid sequence, 555 residues long: MTDTTADQTRHGDRPYDVVIIGSGLSGTMLGSILAKHGFRIMLLDGAHHPRFAVGESTIGQTLVVLRLISDRYGVPEIANLASFQDVLANVSSSHGQKSNFGFMFHRDGEEPDPNETSQFRIPSIVGNAAHFFRQDTDSYMFHAAVRYGCDARQYYRVENIEFDDGGVTVSGADGSTVRARYLVDASGFRSPLARQLGLREEPSRLKHHARSIFTHMVGVDAIDDHVDTPAELRPPVPWNDGTMHHIFERGWMWIIPFNNHPGATNPLCSVGIQLDERRYPARPDLTPEEEFWSHVDRFPAVQRQLKGARSVREWVRTDRMQYSSSRTVGERWCLMSHAAGFIDPLFSRGLSNTCEIINALSWRLMAALREDDFAVERFAYVEELEQGLLDWNDKLVNNSFISFSHYPLWNSVFRIWASASVIGGKRILNALTRTKETGDDSHCQALDDNPYPGLWCPLDFYKEAFDELTELCEAVDAGHTTAEEAARVLEQRVRESDWMLPALGFNDPDTHHINPTADKMIRIAEWATGHHRPEIRELLAASAEEVRAAMRVKP.

22–27 (GSGLSG) is an FAD binding site.

Belongs to the flavin-dependent halogenase family. Bacterial tryptophan halogenase subfamily. Homodimer.

It carries out the reaction tetracycline + FADH2 + chloride + O2 = 7-chlorotetracycline + FAD + 2 H2O + H(+). The protein operates within antibiotic biosynthesis. In terms of biological role, involved in the biosynthesis of chlorotetracycline (CTC), an important member from antibiotics tetracycline (TC) family, which inhibits protein synthesis in bacteria and is widely involved in clinical therapy, animal feeds and aquaculture. Utilizes FADH(2) supplied by the flavin reductase CtcQ, to catalyze the chlorination of tetracycline (TC) at C7 position, leading to the production of 7-chlorotetracycline. The enzyme forms a lysine chloramine intermediate on an internal lysine residue before transferring the chlorine to the substrate. It is stereo-selective for the 4S (natural) isomer of tetracycline. This chain is Tetracycline 7-halogenase, found in Kitasatospora aureofaciens (Streptomyces aureofaciens).